Consider the following 336-residue polypeptide: Ornithine carbamoyltransferase, catabolic (336 aa).

Residues 57–60 (STRT), Gln84, Arg108, and 135–138 (HPTQ) contribute to the carbamoyl phosphate site. L-ornithine contacts are provided by residues Asn169, Asp233, and 237-238 (SM). Carbamoyl phosphate contacts are provided by residues 275 to 276 (CL) and Arg322.

This sequence belongs to the aspartate/ornithine carbamoyltransferase superfamily. OTCase family.

The protein localises to the cytoplasm. It catalyses the reaction carbamoyl phosphate + L-ornithine = L-citrulline + phosphate + H(+). It functions in the pathway amino-acid degradation; L-arginine degradation via ADI pathway; carbamoyl phosphate from L-arginine: step 2/2. Reversibly catalyzes the transfer of the carbamoyl group from carbamoyl phosphate (CP) to the N(epsilon) atom of ornithine (ORN) to produce L-citrulline. In Photobacterium profundum (strain SS9), this protein is Ornithine carbamoyltransferase, catabolic.